The sequence spans 725 residues: Kinesin-like protein KIN-8A (725 aa).

Residues 1 to 32 are disordered; it reads MPVSTRSKVMKQERNEQENTNLNLPLRNPHQG. One can recognise a Kinesin motor domain in the interval 151–481; that stretch reads RILVFVRLRP…LHWADRAKEI (331 aa). 243–250 is an ATP binding site; sequence GATGAGKT. Coiled-coil stretches lie at residues 499–541 and 583–617; these read EGAD…AANN and ESLK…EHGL. 2 disordered regions span residues 652-672 and 691-725; these read GSLR…RFAS and SPAL…HMKH. The segment covering 655-665 has biased composition (basic and acidic residues); that stretch reads RPKEKEKELKS.

This sequence belongs to the TRAFAC class myosin-kinesin ATPase superfamily. Kinesin family. KIN-8 subfamily.

The polypeptide is Kinesin-like protein KIN-8A (Arabidopsis thaliana (Mouse-ear cress)).